We begin with the raw amino-acid sequence, 319 residues long: ATP-dependent 6-phosphofructokinase (319 aa).

G11 contributes to the ATP binding site. 21 to 25 (RAVAR) contacts ADP. ATP contacts are provided by residues 72-73 (RY) and 102-105 (GDGS). Residue D103 coordinates Mg(2+). A substrate-binding site is contributed by 125–127 (TID). Residue D127 is the Proton acceptor of the active site. R154 is an ADP binding site. Substrate-binding positions include R162 and 169–171 (MGR). Residues 185 to 187 (GAE) and R211 contribute to the ADP site. Substrate-binding positions include E222, R243, and 249-252 (HIVR).

This sequence belongs to the phosphofructokinase type A (PFKA) family. ATP-dependent PFK group I subfamily. Prokaryotic clade 'B1' sub-subfamily. As to quaternary structure, homotetramer. The cofactor is Mg(2+).

The protein resides in the cytoplasm. The enzyme catalyses beta-D-fructose 6-phosphate + ATP = beta-D-fructose 1,6-bisphosphate + ADP + H(+). It participates in carbohydrate degradation; glycolysis; D-glyceraldehyde 3-phosphate and glycerone phosphate from D-glucose: step 3/4. Its activity is regulated as follows. Allosterically activated by ADP and other diphosphonucleosides, and allosterically inhibited by phosphoenolpyruvate. In terms of biological role, catalyzes the phosphorylation of D-fructose 6-phosphate to fructose 1,6-bisphosphate by ATP, the first committing step of glycolysis. The sequence is that of ATP-dependent 6-phosphofructokinase from Lacticaseibacillus casei (strain BL23) (Lactobacillus casei).